We begin with the raw amino-acid sequence, 245 residues long: RAD51-like protein 1 (245 aa).

In terms of assembly, interacts with brc-2 and rad-51.

The protein resides in the nucleus. Has a role in the homologous recombination repair (HRR) of genomic DNA during meiosis. Required for rad-51 recruitment onto ssDNA gaps generated at stalled replication fork barriers. The chain is RAD51-like protein 1 (rfs-1) from Caenorhabditis elegans.